A 101-amino-acid polypeptide reads, in one-letter code: Phosphoribosyl-AMP cyclohydrolase (101 aa).

Residue D71 coordinates Mg(2+). Residue C72 coordinates Zn(2+). Residues D73 and D75 each coordinate Mg(2+). Positions 88 and 95 each coordinate Zn(2+).

It belongs to the PRA-CH family. In terms of assembly, homodimer. Mg(2+) serves as cofactor. It depends on Zn(2+) as a cofactor.

Its subcellular location is the cytoplasm. It catalyses the reaction 1-(5-phospho-beta-D-ribosyl)-5'-AMP + H2O = 1-(5-phospho-beta-D-ribosyl)-5-[(5-phospho-beta-D-ribosylamino)methylideneamino]imidazole-4-carboxamide. The protein operates within amino-acid biosynthesis; L-histidine biosynthesis; L-histidine from 5-phospho-alpha-D-ribose 1-diphosphate: step 3/9. Catalyzes the hydrolysis of the adenine ring of phosphoribosyl-AMP. This chain is Phosphoribosyl-AMP cyclohydrolase, found in Bacillus cereus (strain ZK / E33L).